The chain runs to 520 residues: Cytochrome P450 72A68 (520 aa).

The chain crosses the membrane as a helical span at residues 11 to 31; the sequence is IILITVTFGLVYAWRVLNWMW. Position 466 (cysteine 466) interacts with heme.

Belongs to the cytochrome P450 family. Requires heme as cofactor.

It is found in the membrane. It carries out the reaction oleanolate + 3 reduced [NADPH--hemoprotein reductase] + 3 O2 = gypsogenate + 3 oxidized [NADPH--hemoprotein reductase] + 4 H2O + 4 H(+). Its function is as follows. Catalyzes the carboxylation of oleanolic acid at the C-23 position to form gypsogenic acid. Involved in the hemolytic saponin biosynthetic pathway. This Medicago truncatula (Barrel medic) protein is Cytochrome P450 72A68.